The following is a 162-amino-acid chain: Caveolin-2 (162 aa).

The Cytoplasmic portion of the chain corresponds to 1–86 (MGLETEKADV…FEISKYVIYK (86 aa)). Tyr-19 bears the Phosphotyrosine; by SRC mark. A phosphoserine mark is found at Ser-20 and Ser-23. Residue Tyr-27 is modified to Phosphotyrosine; by SRC. Residues 87–107 (FLTVFLAIPLAFVAGILFATL) constitute an intramembrane region (helical). At 108–162 (SCLHIWIIMPFVKTCLMLLPSVQTIWKSVTDVVIAPLCTSAGRSFSSVSLQLSHD) the chain is on the cytoplasmic side.

The protein belongs to the caveolin family. In terms of assembly, monomer or homodimer. Interacts with CAV1; the interaction forms a stable heterooligomeric complex that is required for targeting to lipid rafts and for caveolae formation. Tyrosine phosphorylated forms do not form heterooligomers with the Tyr-19-phosphorylated form existing as a monomer or dimer, and the Tyr-27-form as a monomer only. Interacts (tyrosine phosphorylated form) with the SH2 domain-containing proteins, RASA1, NCK1 and SRC. Interacts (tyrosine phosphorylated form) with INSR, the interaction (Tyr-27-phosphorylated form) is increased on insulin stimulation. Interacts (Tyr-19 phosphorylated form) with MAPK1 (phosphorylated form); the interaction, promoted by insulin, leads to nuclear location and MAPK1 activation. Interacts with STAT3; the interaction is increased on insulin-induced tyrosine phosphorylation leading to STAT activation. Phosphorylated on serine and tyrosine residues. CAV1 promotes phosphorylation on Ser-23 which then targets the complex to the plasma membrane, lipid rafts and caveolae. Phosphorylation on both Tyr-19 and Tyr-27 is required for insulin-induced 'Ser-727' phosphorylation of STAT3 and its activation. Phosphorylation on Tyr-19 is required for insulin-induced phosphorylation of MAPK1 and DNA binding of STAT3. Tyrosine phosphorylation is induced by both EGF and insulin.

It is found in the nucleus. The protein localises to the cytoplasm. Its subcellular location is the golgi apparatus membrane. The protein resides in the cell membrane. It localises to the membrane. It is found in the caveola. In terms of biological role, may act as a scaffolding protein within caveolar membranes. Interacts directly with G-protein alpha subunits and can functionally regulate their activity. Acts as an accessory protein in conjunction with CAV1 in targeting to lipid rafts and driving caveolae formation. Positive regulator of cellular mitogenesis of the MAPK signaling pathway. Required for the insulin-stimulated nuclear translocation and activation of MAPK1 and STAT3, and the subsequent regulation of cell cycle progression. The protein is Caveolin-2 (CAV2) of Equus caballus (Horse).